Here is a 470-residue protein sequence, read N- to C-terminus: Carboxypeptidase Q (470 aa).

The N-terminal stretch at 1–18 is a signal peptide; sequence MRSLFFLFIVHLLALGSG. The propeptide occupies 19–42; the sequence is KAVFKNGVSQRTFREIKEEIANYE. The N-linked (GlcNAc...) asparagine glycan is linked to N59. Zn(2+) is bound by residues H288 and D300. Catalysis depends on E334, which acts as the Nucleophile. Residue E335 coordinates Zn(2+). N351 carries an N-linked (GlcNAc...) asparagine glycan. Residue D362 participates in Zn(2+) binding. N394 carries an N-linked (GlcNAc...) asparagine glycan. Zn(2+) is bound at residue H432.

The protein belongs to the peptidase M28 family. In terms of assembly, homodimer. The monomeric form is inactive while the homodimer is active. N-glycosylated. The secreted form is modified by hybrid or complex type oligosaccharide chains.

The protein resides in the endoplasmic reticulum. The protein localises to the golgi apparatus. It localises to the lysosome. It is found in the secreted. In terms of biological role, carboxypeptidase that may play an important role in the hydrolysis of circulating peptides. Catalyzes the hydrolysis of dipeptides with unsubstituted terminals into amino acids. May play a role in the liberation of thyroxine hormone from its thyroglobulin (Tg) precursor. In Mus musculus (Mouse), this protein is Carboxypeptidase Q (Cpq).